The primary structure comprises 274 residues: Rhamnulose-1-phosphate aldolase (274 aa).

Residue Glu-117 is part of the active site. The Zn(2+) site is built by His-141, His-143, and His-212.

Belongs to the aldolase class II family. RhaD subfamily. As to quaternary structure, homotetramer. Zn(2+) serves as cofactor.

It localises to the cytoplasm. It carries out the reaction L-rhamnulose 1-phosphate = (S)-lactaldehyde + dihydroxyacetone phosphate. Its pathway is carbohydrate degradation; L-rhamnose degradation; glycerone phosphate from L-rhamnose: step 3/3. In terms of biological role, catalyzes the reversible cleavage of L-rhamnulose-1-phosphate to dihydroxyacetone phosphate (DHAP) and L-lactaldehyde. The protein is Rhamnulose-1-phosphate aldolase of Escherichia coli (strain SE11).